Reading from the N-terminus, the 321-residue chain is Glycolipid transfer protein domain-containing protein 2 (321 aa).

Belongs to the GLTP family.

The protein is Glycolipid transfer protein domain-containing protein 2 (Gltpd2) of Mus musculus (Mouse).